Consider the following 233-residue polypeptide: MNKPIIALDFQTYEEVETFLAKFSGETLSVKVGMELFYSNGPVIVEKIKQQNHEIFLDLKLHDIPNTVKSAMIGLAKLGVDMVNVHAAGGKKMMEAAKEGLEIGSPSGKRPKIIAVTQLTSTSETDMQTEQLIKTSLLESVMHYSNLSKQAGLDGVVCSALEAEDIKQQNGADFLRVTPGIRLASDTADDQIRVVTPEKARLIGSSNIVVGRSITRANDPVAAYNQVLKEWNA.

Substrate contacts are provided by residues D9, K31, 58-67 (DLKLHDIPNT), T120, R182, Q191, G211, and R212. Residue K60 is the Proton donor of the active site.

Belongs to the OMP decarboxylase family. Type 1 subfamily. In terms of assembly, homodimer.

It catalyses the reaction orotidine 5'-phosphate + H(+) = UMP + CO2. It participates in pyrimidine metabolism; UMP biosynthesis via de novo pathway; UMP from orotate: step 2/2. Its function is as follows. Catalyzes the decarboxylation of orotidine 5'-monophosphate (OMP) to uridine 5'-monophosphate (UMP). This is Orotidine 5'-phosphate decarboxylase from Listeria monocytogenes serovar 1/2a (strain ATCC BAA-679 / EGD-e).